A 656-amino-acid polypeptide reads, in one-letter code: Heparan-alpha-glucosaminide N-acetyltransferase (656 aa).

The tract at residues 1–31 (MTGGSSSRRRRAEERSSAAGTERNSRREAVG) is disordered. At 1–185 (MTGGSSSRRR…IIVNENPVDS (185 aa)) the chain is on the lumenal, vesicle side. N-linked (GlcNAc...) asparagine glycosylation is found at N137 and N157. Cysteines 146 and 455 form a disulfide. Residues 186–206 (NLPVSIAFLVGLALIVAVSLL) form a helical membrane-spanning segment. At 207–268 (RLLLSLDDVN…NRLRCVDTFR (62 aa)) the chain is on the cytoplasmic side. Positions 234–253 (SELGSPSRADPLSADYQPET) are disordered. 2 positions are modified to phosphoserine: S238 and S240. Residue Y249 is modified to Phosphotyrosine. The chain crosses the membrane as a helical span at residues 269–289 (GLALVLMVFVNYGGGKYWYFK). The active site involves H290. At 290-295 (HSSWNG) the chain is on the lumenal, vesicle side. Residues 296–316 (LTVADLVFPWFVFIMGTSIFL) traverse the membrane as a helical segment. Residues 317–338 (SMTSILQRGCSKLKLLGKIVWR) are Cytoplasmic-facing. Residues 339-359 (SFLLICIGVIIVNPNYCLGPL) form a helical membrane-spanning segment. Over 360–367 (SWDKVRIP) the chain is Lumenal, vesicle. Residues 368 to 388 (GVLQRLGVTYFVVAVLEFFFW) form a helical membrane-spanning segment. Topologically, residues 389 to 413 (KPVPDSCTLESSCFSLRDITSSWPQ) are cytoplasmic. The helical transmembrane segment at 414–434 (WLTILTLESIWLALTFFLPVP) threads the bilayer. At 435 to 493 (GCPTGYLGPGGIGDLGKYPHCTGGAAGYIDRLLLGDNHLYQHPSSTVLYHTEVAYDPEG) the chain is on the lumenal, vesicle side. Residues 494–514 (VLGTINSIVMAFLGVQAGKIL) form a helical membrane-spanning segment. The Cytoplasmic segment spans residues 515 to 522 (VYYKDQTK). A helical membrane pass occupies residues 523-543 (AILTRFAAWCCILGLISIVLT). Over 544–557 (KVSANEGFIPINKN) the chain is Lumenal, vesicle. A helical transmembrane segment spans residues 558–578 (LWSISYVTTLSCFAFFILLIL). At 579–585 (YPVVDVK) the chain is on the cytoplasmic side. Residues 586 to 606 (GLWTGTPFFYPGMNSILVYVG) traverse the membrane as a helical segment. Residues 607 to 627 (HEVLENYFPFQWKLADEQSHK) lie on the Lumenal, vesicle side of the membrane. The chain crosses the membrane as a helical span at residues 628–648 (EHLIQNIVATALWVLIAYVLY). The segment at 641–656 (VLIAYVLYKKKLFWKI) is lysosomal targeting region. Topologically, residues 649–656 (KKKLFWKI) are cytoplasmic.

Homooligomer. Homooligomerization is necessary for enzyme activity. Post-translationally, undergoes intralysosomal proteolytic cleavage; occurs within the end of the first and/or the beginning of the second luminal domain and is essential for the activation of the enzyme. In terms of processing, glycosylated. In terms of tissue distribution, expressed in the retina.

It localises to the lysosome membrane. It carries out the reaction alpha-D-glucosaminyl-[heparan sulfate](n) + acetyl-CoA = N-acetyl-alpha-D-glucosaminyl-[heparan sulfate](n) + CoA + H(+). Lysosomal acetyltransferase that acetylates the non-reducing terminal alpha-glucosamine residue of intralysosomal heparin or heparan sulfate, converting it into a substrate for luminal alpha-N-acetyl glucosaminidase. This Mus musculus (Mouse) protein is Heparan-alpha-glucosaminide N-acetyltransferase (Hgsnat).